Consider the following 243-residue polypeptide: Fibroblast growth factor 12 (243 aa).

Disordered regions lie at residues 1–39 (MAAA…DGRS) and 216–243 (IGEK…QDST). The Bipartite nuclear localization signal motif lies at 11–38 (RQKRQARESNSDRVSASKRRSSPSKDGR).

It belongs to the heparin-binding growth factors family. As to quaternary structure, interacts with the C-terminal region of SCN9A. As to expression, brain, eye and testis; highly expressed in embryonic retina, olfactory epithelium, olfactory bulb, and in a segmental pattern of the body wall; in adult olfactory bulb, less in cerebellum, deep cerebellar nuclei, cortex and multiple midbrain structures.

The protein resides in the nucleus. Involved in nervous system development and function. Involved in the positive regulation of voltage-gated sodium channel activity. Promotes neuronal excitability by elevating the voltage dependence of neuronal sodium channel SCN8A fast inactivation. The chain is Fibroblast growth factor 12 (FGF12) from Homo sapiens (Human).